The primary structure comprises 216 residues: Small ribosomal subunit protein uS3 (216 aa).

The 71-residue stretch at 38–108 (LREFVKKKLH…DLAIDIQEVK (71 aa)) folds into the KH type-2 domain.

Belongs to the universal ribosomal protein uS3 family. Part of the 30S ribosomal subunit. Forms a tight complex with proteins S10 and S14.

In terms of biological role, binds the lower part of the 30S subunit head. Binds mRNA in the 70S ribosome, positioning it for translation. In Desulfosudis oleivorans (strain DSM 6200 / JCM 39069 / Hxd3) (Desulfococcus oleovorans), this protein is Small ribosomal subunit protein uS3.